Here is a 507-residue protein sequence, read N- to C-terminus: Cytochrome P450 71A4 (507 aa).

Residues 3–23 traverse the membrane as a helical segment; that stretch reads VPCLWYSLLILLLLFIFLLIH. Cysteine 448 is a heme binding site.

Belongs to the cytochrome P450 family. Heme is required as a cofactor.

Its subcellular location is the membrane. May have a role in maturation, such as during flavor formation or other metabolite production specific to aging tissues. The chain is Cytochrome P450 71A4 (CYP71A4) from Solanum melongena (Eggplant).